The sequence spans 817 residues: MGDILAHESELLGLVKEYLDFAEFEDTLKTFSKECKVKGKPLCKNVGGPLKKDSKSLVIQRDLVAAFDSGDQKAFFDLWEGHIPSSVRDTDSLAQKLEFYLHIHFAIYLLKYCRGRPDKQELDKRISYFKTYLETKGAALSQTTEFLPFYALPFVPNPMVHPSFKELFQDSWTPELKLKLEKFLALTFKANNTPKLLTIYKENGPNSKELLQQLHQQLVEAERRAMTYLKRYNKIQADYHNLIGVTAELVDSLEATVSGKMITPEYLQSVCVRLFSNQMRQSLAHSVDFTRPGTASTMLRASLAPEKLKDVPLLPSLDYEKLKKDLIWGSDRLKAFLLQALRWRLTTSHPGEQRETVLQAYISNDLLDCHSHNQRSVLQLLHSKSEAVRQYMARLINALASLAEGRLYLAQNTKVLRMLEGRLKEEDKDVITRENVLGALQKFSLRRPLQTAMIRDGLIFWLIDLLKDPDCLSDYTLEYSVALLMNLCLRSAGKNMCAKVAGLMLKVLSDLLGHENHEIQPYVNGALYSILSIPSIREEARAMGMEDILRCFIKEGNAEMIRQIEFIIKQLNSEDLLDGVLESDDDEDEDDEEDHDIMEADLDKDELIQPQLGELSGEKLLTTEYLGIMTNTGKARRKGPASVQWSGDEPLRRPVTPGGHRTGCPVLGDHLISPQNAQQARNGCLRAMPVAHPDDYKEGKPGVTGCGTSSSFMDHKPREWSPAGHQKSRLVPTAALGWPREMTQDPSSGHITREFVPAFTCKPQVPSTPETVEQNPLKAKALSLAPQFSSSGPQQASRPASTASSTRGLHSSQSIRK.

Positions 7–39 constitute a LisH domain; it reads HESELLGLVKEYLDFAEFEDTLKTFSKECKVKG. Positions 204–230 form a coiled coil; it reads GPNSKELLQQLHQQLVEAERRAMTYLK. The residue at position 583 (Ser583) is a Phosphoserine. Disordered regions lie at residues 637–659 and 761–817; these read RKGP…TPGG and CKPQ…SIRK. Positions 765–774 are enriched in polar residues; it reads VPSTPETVEQ. The segment covering 793 to 807 has biased composition (low complexity); sequence PQQASRPASTASSTR. Residues 808 to 817 are compositionally biased toward polar residues; sequence GLHSSQSIRK.

Interacts with TOGARAM1, CCDC66, CEP104, CSPP1 and CEP290. Interacts with NDUFAF2.

Its subcellular location is the cytoplasm. The protein localises to the cytoskeleton. The protein resides in the cilium basal body. It is found in the cell projection. It localises to the cilium. Its subcellular location is the microtubule organizing center. The protein localises to the centrosome. The protein resides in the centriole. In terms of biological role, involved in ciliogenesis. It is required for appropriate acetylation and polyglutamylation of ciliary microtubules, and regulation of cilium length. Acts as a positive regulator of hedgehog (Hh) signaling. May participate in the trafficking and/or retention of GLI2 and GLI3 proteins at the ciliary tip. This chain is LisH domain-containing protein ARMC9, found in Mus musculus (Mouse).